Reading from the N-terminus, the 567-residue chain is MSDDIRNLVYKYALHNAYTHNGKANVNAVVSKIFAERPELRSKAKDIVEIAKELVNYVNSLDVESQKKELESKFPEMLEEKKREKESKKELPDIPVSGVLVTRFAPNPDGPLHLGNARAAIISHEYARIYNGKFILRFDDTDPKTKKPIPEAYDWIKEDLKWLGIKWDLEVRASARLETYYNFARILLSKGYAYIDLCKEAEFKERRSKREACPHRETSPESNLELFEKMIHGEFEEGKAVVRLKTDLKLPDPSQRDWVLLRVINVKKSPHPIEGDKYWVWPTYNFASAIDDYDLGVTHIFRGKEHAVNAEKQKWIYNYMGWKYPYVREFGRLKLEGFMMSKSKIRTVVEKGVGIDDPRLPTLAGLRRRGILSDTIKEIIITVGLKETDATISFDNLASTNRKKLDKIAKRLMFVGSPKEFIIDIPQPILAKIPYHPSNPNEYREISVNPGDIILINENDAKDKVLRLMELCNVTVNGDKLVYNSKGIEDAKKLGMKIIQWVKKDESVPVVVLSPDPEKGIETINGVGESEIRNLNKGEIVQFIRYGFVKVDEKSADGQVTVIFSHE.

Positions 106-116 (PNPDGPLHLGN) match the 'HIGH' region motif.

Belongs to the class-I aminoacyl-tRNA synthetase family. Glutamate--tRNA ligase type 2 subfamily.

It localises to the cytoplasm. The catalysed reaction is tRNA(Glu) + L-glutamate + ATP = L-glutamyl-tRNA(Glu) + AMP + diphosphate. In terms of biological role, catalyzes the attachment of glutamate to tRNA(Glu) in a two-step reaction: glutamate is first activated by ATP to form Glu-AMP and then transferred to the acceptor end of tRNA(Glu). The sequence is that of Glutamate--tRNA ligase from Sulfolobus acidocaldarius (strain ATCC 33909 / DSM 639 / JCM 8929 / NBRC 15157 / NCIMB 11770).